A 155-amino-acid chain; its full sequence is Mitochondrial import protein 1 (155 aa).

Belongs to the MIM1 family.

It is found in the mitochondrion outer membrane. In terms of biological role, required for the assembly of the TOM (translocase of outer membrane) receptor complex, which is responsible for the recognition and translocation of cytosolically synthesized mitochondrial preproteins. The sequence is that of Mitochondrial import protein 1 from Eremothecium gossypii (strain ATCC 10895 / CBS 109.51 / FGSC 9923 / NRRL Y-1056) (Yeast).